A 215-amino-acid polypeptide reads, in one-letter code: Soluble inorganic pyrophosphatase (215 aa).

Low complexity predominate over residues 1 to 21 (MSQEDSTSAAAAQQPTSRPAP). The tract at residues 1–24 (MSQEDSTSAAAAQQPTSRPAPKLN) is disordered. Mg(2+)-binding residues include aspartate 103, aspartate 108, and aspartate 140.

This sequence belongs to the PPase family. Requires Mg(2+) as cofactor. Expressed in metabolically active tissue such as root, shoot, embryo and aleurone.

It localises to the cytoplasm. It carries out the reaction diphosphate + H2O = 2 phosphate + H(+). May play a role in germination. The polypeptide is Soluble inorganic pyrophosphatase (IPP) (Hordeum vulgare subsp. vulgare (Domesticated barley)).